A 132-amino-acid chain; its full sequence is Large ribosomal subunit protein bL17 (132 aa).

The protein belongs to the bacterial ribosomal protein bL17 family. In terms of assembly, part of the 50S ribosomal subunit. Contacts protein L32.

The sequence is that of Large ribosomal subunit protein bL17 from Variovorax paradoxus (strain S110).